The sequence spans 534 residues: MGAGSSSYRPKAIYLDIDGRIQKVVFSKYCNSSDIMDLFCIATGLPRNTTISLLTTDDAMVSIDPTMPANSERTPYKVRPVAVKQVSEREELIQGVLAQVAEQFSRAFKINELKAEVANHLAVLEKRVELEGLKVVEIEKCKSDIKKMREELAARNSRTNCPCKYSFLDNKKLTPRRDVPTYPKYLLSPETIEALRKPTFDVWLWEPNEMLSCLEHMYHDLGLVRDFSINPITLRRWLLCVHDNYRNNPFHNFRHCFCVTQMMYSMVWLCGLQEKFSQMDILVLMTAAICHDLDHPGYNNTYQINARTELAVRYNDISPLENHHCAIAFQILARPECNIFASVPPEGFRQIRQGMITLILATDMARHAEIMDSFKEKMENFDYSNEEHLTLLKMILIKCCDISNEVRPMEVAEPWVDCLLEEYFMQSDREKSEGLPVAPFMDRDKVTKATAQIGFIKFVLIPMFETVTKLFPVVEETMLRPLWESREHYEELKQLDDAMKELQKKTESLTSGAPENTTEKNRDAKDSEGHSPPN.

The PDEase domain occupies Pro175–Asp496. His251 functions as the Proton donor in the catalytic mechanism. Residue His251–His255 participates in 3',5'-cyclic GMP binding. Positions 255, 291, and 292 each coordinate Zn(2+). Position 292 (Asp292) interacts with 3',5'-cyclic GMP. Asp292 is a binding site for Mg(2+). Ser318 is modified (phosphoserine). 3',5'-cyclic GMP is bound by residues Asp401, Tyr423, and Ala451–Gln452. Zn(2+) is bound at residue Asp401. Residues Lys500–Asn534 are disordered. Basic and acidic residues predominate over residues Thr517 to Asn534.

It belongs to the cyclic nucleotide phosphodiesterase family. PDE9 subfamily. As to quaternary structure, homodimer. Zn(2+) is required as a cofactor. Requires Mg(2+) as cofactor. Highly expressed in kidney. Lower levels in liver, lung and brain. Widely expressed in brain, with highest expression in cerebellar Purkinje cells. Present in heart (at protein level).

It is found in the cell projection. The protein localises to the ruffle membrane. Its subcellular location is the cytoplasm. It localises to the perinuclear region. The protein resides in the golgi apparatus. It is found in the endoplasmic reticulum. The protein localises to the cell membrane. Its subcellular location is the sarcolemma. The enzyme catalyses 3',5'-cyclic GMP + H2O = GMP + H(+). It participates in purine metabolism; 3',5'-cyclic GMP degradation; GMP from 3',5'-cyclic GMP: step 1/1. Its activity is regulated as follows. Inhibited by SCH 51866 and moderately, by zaprinast. Specifically inhibited by PF-04447943 (6-[(3S,4S)-4-methyl-1-(pyrimidin-2-ylmethyl)pyrrolidin-3-yl]-1-(tetrahydro-2H-pyran-4-yl)-1,5-dihydro-4H-pyrazolo[3,4-d]pyrimidin-4-one). In terms of biological role, specifically hydrolyzes the second messenger cGMP, which is a key regulator of many important physiological processes. Highly specific: compared to other members of the cyclic nucleotide phosphodiesterase family, has the highest affinity and selectivity for cGMP. Specifically regulates natriuretic-peptide-dependent cGMP signaling in heart, acting as a regulator of cardiac hypertrophy in myocytes and muscle. Does not regulate nitric oxide-dependent cGMP in heart. Additional experiments are required to confirm whether its ability to hydrolyze natriuretic-peptide-dependent cGMP is specific to heart or is a general feature of the protein. In brain, involved in cognitive function, such as learning and long-term memory. The protein is High affinity cGMP-specific 3',5'-cyclic phosphodiesterase 9A (Pde9a) of Mus musculus (Mouse).